A 317-amino-acid chain; its full sequence is D-alanine--D-alanine ligase (317 aa).

In terms of domain architecture, ATP-grasp spans 103-299 (KHIFHSLNID…FNELVKIIVE (197 aa)). ATP is bound at residue 130–183 (KVDYPYVLKPINEGSSIGVHMIFSHEDYLELKNNSSTIMEKMIIEEYIPGIELH). The Mg(2+) site is built by Asp-251, Glu-265, and Asn-267.

It belongs to the D-alanine--D-alanine ligase family. It depends on Mg(2+) as a cofactor. Requires Mn(2+) as cofactor.

The protein localises to the cytoplasm. It carries out the reaction 2 D-alanine + ATP = D-alanyl-D-alanine + ADP + phosphate + H(+). The protein operates within cell wall biogenesis; peptidoglycan biosynthesis. Functionally, cell wall formation. The polypeptide is D-alanine--D-alanine ligase (Wolbachia pipientis subsp. Culex pipiens (strain wPip)).